The following is a 166-amino-acid chain: UPF0561 protein C2orf68 (166 aa).

Residues 32–107 (NQIARDDYDK…SELEPSGHQL (76 aa)) are disordered. Composition is skewed to basic and acidic residues over residues 34 to 49 (IARD…AAKE) and 73 to 85 (RHRD…RNPD). The segment covering 91 to 104 (ESSSSGGSELEPSG) has biased composition (low complexity).

This sequence belongs to the UPF0561 family.

This chain is UPF0561 protein C2orf68 (C2orf68), found in Homo sapiens (Human).